The following is an 847-amino-acid chain: MMATEKISPGMQQYLDIKAQYPDAFLLFRMGDFYELFYEDAVEAAQILELSLTSRNKNAENPIPMAGVPYHAAQQYIDTLVELGHKVAIAEQMEDPKQAVGVVKREVVQVITPGTVTDSSKMGADSNYLVAIDRQGVQFALSYMDVSTGQFFVTSLDDFTSLCGEIRNLRARELVIGYALSEEEEQVFSNQMNLLLSFEDEVTEDVQLIDNSLTDLEKAAAGKLLSYLHRTQMRDLSHLQKVVHYEIKDYLQMDYATKSSLDLLENGRTGKKHGSLYWLLDETKTAMGMRLLRTWIDRPLIDLKRIENRQAVVQVFLDYFFERSDLVEALKGVYDIERLASRVSFGKTMPKDLLQLSQTLGNIPAIKNILQQINEPALGNLVAGLDPIPELHALISSAIDPEAQGTITDGNIIRTGFDETLDQYRLVMREGAGWIAEIEAKEREASGINNLKIDYNKKDGYYFHVTNSNLGNVPDHFFRKATLKNSERYGTEELAKIEGQMLEARDKSANLEYEIFMRIRQEVEKYIGRLQKLARTIATIDVLQAFAVVAEQQHLVCPRFTDQRELTIDRGRHAVVEKVMGKQTYIPNSIHLNTDTHMQLITGPNMSGKSTYMRQLAVIVIMAQMGSYVPADQAELPIFDAIFTRIGAADDLVSGQSTFMVEMMEANKAVRLATDRSLILFDELGRGTATYDGMALAQSIIEYIHDKIGAKTLFATHYHELTDLSQTLEHLENVHVSTLEKDGQVTFLHKIAQGPADKSYGIHVAKIAGMPEELLQRADRILQTLENQAPTAPTHPAPSVVEEPSGQLDLFADTPSHPVLDELEKLDIYNMTPMEVMMAVAELKKKI.

Gly-603–Ser-610 is an ATP binding site.

It belongs to the DNA mismatch repair MutS family.

Its function is as follows. This protein is involved in the repair of mismatches in DNA. It is possible that it carries out the mismatch recognition step. This protein has a weak ATPase activity. The sequence is that of DNA mismatch repair protein MutS from Streptococcus suis (strain 98HAH33).